The sequence spans 452 residues: Chaperone SurA (452 aa).

The N-terminal stretch at M1–A28 is a signal peptide. PpiC domains follow at residues Q186 to D288 and I302 to S400.

It is found in the periplasm. The catalysed reaction is [protein]-peptidylproline (omega=180) = [protein]-peptidylproline (omega=0). Its function is as follows. Chaperone involved in the correct folding and assembly of outer membrane proteins. Recognizes specific patterns of aromatic residues and the orientation of their side chains, which are found more frequently in integral outer membrane proteins. May act in both early periplasmic and late outer membrane-associated steps of protein maturation. This chain is Chaperone SurA, found in Burkholderia lata (strain ATCC 17760 / DSM 23089 / LMG 22485 / NCIMB 9086 / R18194 / 383).